The primary structure comprises 264 residues: uncharacterized protein (264 aa).

An N-terminal signal peptide occupies residues 1–22; it reads MGYLKKLALFISVIILGIFIIG. Cys-23 carries the N-palmitoyl cysteine lipid modification. A lipid anchor (S-diacylglycerol cysteine) is attached at Cys-23.

The protein belongs to the staphylococcal tandem lipoprotein family.

It localises to the cell membrane. This is an uncharacterized protein from Staphylococcus aureus (strain N315).